An 89-amino-acid chain; its full sequence is Small ribosomal subunit protein uS14 (89 aa).

The protein belongs to the universal ribosomal protein uS14 family. As to quaternary structure, part of the 30S ribosomal subunit. Contacts proteins S3 and S10.

Functionally, binds 16S rRNA, required for the assembly of 30S particles and may also be responsible for determining the conformation of the 16S rRNA at the A site. The protein is Small ribosomal subunit protein uS14 of Latilactobacillus sakei subsp. sakei (strain 23K) (Lactobacillus sakei subsp. sakei).